Here is a 110-residue protein sequence, read N- to C-terminus: Ribonuclease P protein component (110 aa).

The protein belongs to the RnpA family. As to quaternary structure, consists of a catalytic RNA component (M1 or rnpB) and a protein subunit.

It catalyses the reaction Endonucleolytic cleavage of RNA, removing 5'-extranucleotides from tRNA precursor.. In terms of biological role, RNaseP catalyzes the removal of the 5'-leader sequence from pre-tRNA to produce the mature 5'-terminus. It can also cleave other RNA substrates such as 4.5S RNA. The protein component plays an auxiliary but essential role in vivo by binding to the 5'-leader sequence and broadening the substrate specificity of the ribozyme. The chain is Ribonuclease P protein component from Mesorhizobium japonicum (strain LMG 29417 / CECT 9101 / MAFF 303099) (Mesorhizobium loti (strain MAFF 303099)).